The sequence spans 357 residues: Isopentenyl-diphosphate delta-isomerase (357 aa).

12–13 contributes to the substrate binding site; that stretch reads RK. FMN is bound by residues S70, 71-73, S101, and N130; that span reads SMT. A substrate-binding site is contributed by 101 to 103; that stretch reads SMR. Q165 is a binding site for substrate. A Mg(2+)-binding site is contributed by E166. FMN-binding positions include K197, 289-291, and 310-311; these read GIR and AQ.

This sequence belongs to the IPP isomerase type 2 family. Homooctamer. Dimer of tetramers. FMN is required as a cofactor. NADPH serves as cofactor. Requires Mg(2+) as cofactor.

Its subcellular location is the cytoplasm. It carries out the reaction isopentenyl diphosphate = dimethylallyl diphosphate. In terms of biological role, involved in the biosynthesis of isoprenoids. Catalyzes the 1,3-allylic rearrangement of the homoallylic substrate isopentenyl (IPP) to its allylic isomer, dimethylallyl diphosphate (DMAPP). The sequence is that of Isopentenyl-diphosphate delta-isomerase from Chlorobaculum parvum (strain DSM 263 / NCIMB 8327) (Chlorobium vibrioforme subsp. thiosulfatophilum).